We begin with the raw amino-acid sequence, 485 residues long: Glutamyl-tRNA(Gln) amidotransferase subunit A (485 aa).

Residues lysine 79 and serine 154 each act as charge relay system in the active site. The active-site Acyl-ester intermediate is the serine 178.

The protein belongs to the amidase family. GatA subfamily. Heterotrimer of A, B and C subunits.

The catalysed reaction is L-glutamyl-tRNA(Gln) + L-glutamine + ATP + H2O = L-glutaminyl-tRNA(Gln) + L-glutamate + ADP + phosphate + H(+). Allows the formation of correctly charged Gln-tRNA(Gln) through the transamidation of misacylated Glu-tRNA(Gln) in organisms which lack glutaminyl-tRNA synthetase. The reaction takes place in the presence of glutamine and ATP through an activated gamma-phospho-Glu-tRNA(Gln). The sequence is that of Glutamyl-tRNA(Gln) amidotransferase subunit A from Staphylococcus epidermidis (strain ATCC 35984 / DSM 28319 / BCRC 17069 / CCUG 31568 / BM 3577 / RP62A).